A 64-amino-acid polypeptide reads, in one-letter code: U-myrmeciitoxin(01)-Mg4b (64 aa).

The N-terminal stretch at methionine 1–glycine 25 is a signal peptide.

It belongs to the ant myrmeciitoxin-01 family. In terms of assembly, homodimer; disulfide-linked. In terms of processing, contains 2 intrachain disulfide bonds (per chain) and 1 interchain disulfide bond. Expressed by the venom gland.

The protein resides in the secreted. Functionally, may have antimicrobial properties, like most ant linear peptides. This chain is U-myrmeciitoxin(01)-Mg4b, found in Myrmecia gulosa (Red bulldog ant).